The following is a 122-amino-acid chain: UPF0102 protein XAC0764 (122 aa).

It belongs to the UPF0102 family.

The polypeptide is UPF0102 protein XAC0764 (Xanthomonas axonopodis pv. citri (strain 306)).